The primary structure comprises 108 residues: Tubulin-specific chaperone A (108 aa).

An N-acetylalanine modification is found at alanine 2.

This sequence belongs to the TBCA family. As to quaternary structure, supercomplex made of cofactors A to E. Cofactors A and D function by capturing and stabilizing tubulin in a quasi-native conformation. Cofactor E binds to the cofactor D-tubulin complex; interaction with cofactor C then causes the release of tubulin polypeptides that are committed to the native state. In terms of tissue distribution, widely expressed, but is most abundant in the testis.

It localises to the cytoplasm. The protein localises to the cytoskeleton. Its function is as follows. Tubulin-folding protein; involved in the early step of the tubulin folding pathway. This is Tubulin-specific chaperone A (TBCA) from Bos taurus (Bovine).